We begin with the raw amino-acid sequence, 466 residues long: L-seryl-tRNA(Sec) selenium transferase (466 aa).

Position 292 is an N6-(pyridoxal phosphate)lysine (lysine 292).

The protein belongs to the SelA family. Pyridoxal 5'-phosphate is required as a cofactor.

Its subcellular location is the cytoplasm. It catalyses the reaction L-seryl-tRNA(Sec) + selenophosphate + H(+) = L-selenocysteinyl-tRNA(Sec) + phosphate. It participates in aminoacyl-tRNA biosynthesis; selenocysteinyl-tRNA(Sec) biosynthesis; selenocysteinyl-tRNA(Sec) from L-seryl-tRNA(Sec) (bacterial route): step 1/1. In terms of biological role, converts seryl-tRNA(Sec) to selenocysteinyl-tRNA(Sec) required for selenoprotein biosynthesis. The protein is L-seryl-tRNA(Sec) selenium transferase of Rhizobium meliloti (strain 1021) (Ensifer meliloti).